The following is a 110-amino-acid chain: MKFVLLFGVLLVTLFSYSSAEMLDDFDQADEDELLSLIEKEEARRDCIPKHHECTSNKHGCCRGHLFKYKCQCTTVVTQSGEETERCFCGTPPHHKAAELVVGFGKKIFG.

The first 20 residues, 1 to 20, serve as a signal peptide directing secretion; the sequence is MKFVLLFGVLLVTLFSYSSA. The propeptide occupies 21-44; sequence EMLDDFDQADEDELLSLIEKEEAR. Cystine bridges form between Cys47–Cys62, Cys54–Cys71, Cys61–Cys89, and Cys73–Cys87.

Belongs to the neurotoxin 19 (CSTX) family. 03 subfamily. In terms of tissue distribution, expressed by the venom gland.

Its subcellular location is the secreted. In Lycosa singoriensis (Wolf spider), this protein is U1-lycotoxin-Ls1ee.